Reading from the N-terminus, the 140-residue chain is uncharacterized protein (140 aa).

Transmembrane regions (helical) follow at residues 63–83 (LGFV…TLAT) and 119–139 (ILLY…IFIN).

The protein resides in the membrane. This is an uncharacterized protein from Schizosaccharomyces pombe (strain 972 / ATCC 24843) (Fission yeast).